We begin with the raw amino-acid sequence, 187 residues long: Elongation factor P (187 aa).

This sequence belongs to the elongation factor P family.

It is found in the cytoplasm. It functions in the pathway protein biosynthesis; polypeptide chain elongation. In terms of biological role, involved in peptide bond synthesis. Stimulates efficient translation and peptide-bond synthesis on native or reconstituted 70S ribosomes in vitro. Probably functions indirectly by altering the affinity of the ribosome for aminoacyl-tRNA, thus increasing their reactivity as acceptors for peptidyl transferase. This is Elongation factor P from Helicobacter hepaticus (strain ATCC 51449 / 3B1).